Here is a 510-residue protein sequence, read N- to C-terminus: O-acetyltransferase pyr7 (510 aa).

It belongs to the fumigaclavine B O-acetyltransferase family.

Its pathway is secondary metabolite biosynthesis; terpenoid biosynthesis. O-acetyltransferase; part of the gene cluster that mediates the biosynthesis of pyripyropene A, a specific human acyl-coenzyme A:cholesterol acyltransferase 2 inhibitor. The first step of the pathway is the synthesis of nicotinyl-CoA from nicotinic acid by the nicotinic acid-CoA ligase pyr1. Nicotinyl-CoA is then a substrate of polyketide synthase pyr2 to produce 4-hydroxy-6-(3-pyridinyl)-2H-pyran-2-one (HPPO) which is further prenylated by the polyprenyl transferase pyr6 to yield farnesyl-HPPO. The next steps consist of an epoxidation of farnesyl-HPPO to epoxyfarnesyl-HPPO by FAD-dependent monooxygenase pyr5 and a cyclization of the terpenoid portion by the terpene cyclase pyr4 to yield deacetyl-pyripyropene E. The 2 cytochrome P450 monooxygenases pyr3 and pyr9, and the 2 acetyltransferases pyr7 and pyr8 are involved in the conversion of deacetyl-pyripyropene E into pyripyropene A through several cycles of oxidation and acetylation steps. Pyr7 acetylates deacetyl-pyripyropene E to pyripyropene E which is oxidized to 11-deacetyl-pyripyropene O by pyr3, which is in turn acetylated into pyripyropene O by pyr8. Pyripyropene O is then oxidized to deacetyl-pyripyropene A by pyr9. Deacetyl-pyripyropene A is finally acetylated to pyripyropene A by pyr8. This Aspergillus fumigatus (strain ATCC MYA-4609 / CBS 101355 / FGSC A1100 / Af293) (Neosartorya fumigata) protein is O-acetyltransferase pyr7.